Here is a 210-residue protein sequence, read N- to C-terminus: Uridine kinase (210 aa).

12–19 (GGSGGGKT) lines the ATP pocket.

It belongs to the uridine kinase family.

It localises to the cytoplasm. The enzyme catalyses uridine + ATP = UMP + ADP + H(+). It carries out the reaction cytidine + ATP = CMP + ADP + H(+). Its pathway is pyrimidine metabolism; CTP biosynthesis via salvage pathway; CTP from cytidine: step 1/3. The protein operates within pyrimidine metabolism; UMP biosynthesis via salvage pathway; UMP from uridine: step 1/1. The protein is Uridine kinase of Streptococcus uberis (strain ATCC BAA-854 / 0140J).